Consider the following 154-residue polypeptide: Myoglobin (154 aa).

The Globin domain occupies 2–148 (GLSDGEWQLV…FRKDIAAKYK (147 aa)). The residue at position 4 (Ser-4) is a Phosphoserine. His-65 lines the nitrite pocket. His-65 lines the O2 pocket. A Phosphothreonine modification is found at Thr-68. His-94 contacts heme b.

The protein belongs to the globin family. As to quaternary structure, monomeric.

It is found in the cytoplasm. Its subcellular location is the sarcoplasm. The enzyme catalyses Fe(III)-heme b-[protein] + nitric oxide + H2O = Fe(II)-heme b-[protein] + nitrite + 2 H(+). The catalysed reaction is H2O2 + AH2 = A + 2 H2O. Its function is as follows. Monomeric heme protein which primary function is to store oxygen and facilitate its diffusion within muscle tissues. Reversibly binds oxygen through a pentacoordinated heme iron and enables its timely and efficient release as needed during periods of heightened demand. Depending on the oxidative conditions of tissues and cells, and in addition to its ability to bind oxygen, it also has a nitrite reductase activity whereby it regulates the production of bioactive nitric oxide. Under stress conditions, like hypoxia and anoxia, it also protects cells against reactive oxygen species thanks to its pseudoperoxidase activity. In Castor fiber (Eurasian beaver), this protein is Myoglobin (MB).